The primary structure comprises 271 residues: Beta-lysine N(6)-acetyltransferase (271 aa).

Residues 86-122 are disordered; it reads LRKDRGTGKNQKKKKISRKKDNWKKRKEKSRLPEGYT. Residues 95-114 are compositionally biased toward basic residues; it reads NQKKKKISRKKDNWKKRKEK. Positions 121-269 constitute an N-acetyltransferase domain; it reads YTLRPAVQAD…GFEDMNIWCR (149 aa).

This sequence belongs to the acetyltransferase family.

The catalysed reaction is (3S)-3,6-diaminohexanoate + acetyl-CoA = (3S)-6-acetamido-3-aminohexanoate + CoA + H(+). Catalyzes the acetylation of beta-lysine to N6-acetyl-beta-lysine, a compatible solute produced by methanogenic archaea that helps cells to cope with salt stress. This chain is Beta-lysine N(6)-acetyltransferase, found in Methanosarcina mazei (strain ATCC BAA-159 / DSM 3647 / Goe1 / Go1 / JCM 11833 / OCM 88) (Methanosarcina frisia).